The sequence spans 207 residues: MARYRGPVVKIMRREGVDLFLKSSYTFNKDKFHRKGPPGMPTKRKGKVSEYGTQLREKQKLKRAYGLLEKQFRNYYEEASHSHGVTGEILLQLLERRLDNVVYRLGFAVTRRQARNFIAHRHVLVNGERVDIPSYRLNVGDKVEIREKFRASTFIADNIRLSQSLQGIPSWLSADYTNFGGDVTALPERHHIDLPVKEQVIVELYSK.

In terms of domain architecture, S4 RNA-binding spans 96-159; that stretch reads RRLDNVVYRL…RASTFIADNI (64 aa).

Belongs to the universal ribosomal protein uS4 family. Part of the 30S ribosomal subunit. Contacts protein S5. The interaction surface between S4 and S5 is involved in control of translational fidelity.

Functionally, one of the primary rRNA binding proteins, it binds directly to 16S rRNA where it nucleates assembly of the body of the 30S subunit. Its function is as follows. With S5 and S12 plays an important role in translational accuracy. In Leptospira borgpetersenii serovar Hardjo-bovis (strain JB197), this protein is Small ribosomal subunit protein uS4.